Consider the following 420-residue polypeptide: UDP-N-acetylglucosamine 1-carboxyvinyltransferase (420 aa).

22–23 contributes to the phosphoenolpyruvate binding site; sequence KN. R93 contacts UDP-N-acetyl-alpha-D-glucosamine. C117 (proton donor) is an active-site residue. Residue C117 is modified to 2-(S-cysteinyl)pyruvic acid O-phosphothioketal. UDP-N-acetyl-alpha-D-glucosamine is bound by residues D306 and I328.

Belongs to the EPSP synthase family. MurA subfamily.

The protein localises to the cytoplasm. It catalyses the reaction phosphoenolpyruvate + UDP-N-acetyl-alpha-D-glucosamine = UDP-N-acetyl-3-O-(1-carboxyvinyl)-alpha-D-glucosamine + phosphate. The protein operates within cell wall biogenesis; peptidoglycan biosynthesis. In terms of biological role, cell wall formation. Adds enolpyruvyl to UDP-N-acetylglucosamine. The polypeptide is UDP-N-acetylglucosamine 1-carboxyvinyltransferase (Colwellia psychrerythraea (strain 34H / ATCC BAA-681) (Vibrio psychroerythus)).